The following is a 91-amino-acid chain: MNENIIPLNRHTQEIPTTESVIKNSGNSEVHIDIHIDTMPIAFAILCSALAAKQMTKEEFDMAYTQLREMNRENNSRSSVKQIINQETEEE.

The disordered stretch occupies residues 71 to 91 (NRENNSRSSVKQIINQETEEE). Over residues 76–91 (SRSSVKQIINQETEEE) the composition is skewed to polar residues.

This is an uncharacterized protein from Bacillus subtilis (strain 168).